Here is a 302-residue protein sequence, read N- to C-terminus: Lysosomal thioesterase PPT2 (302 aa).

The first 27 residues, 1–27 (MPGLWRQRLPSAWALLLLPFLPLLLPA), serve as a signal peptide directing secretion. N60 carries an N-linked (GlcNAc...) asparagine glycan. Cystine bridges form between C109/C117 and C165/C176. S111 serves as the catalytic Nucleophile. N190 and N206 each carry an N-linked (GlcNAc...) asparagine glycan. D228 is a catalytic residue. Residue N245 is glycosylated (N-linked (GlcNAc...) asparagine). An intrachain disulfide couples C276 to C296. The active site involves H283. An N-linked (GlcNAc...) asparagine glycan is attached at N289.

It belongs to the palmitoyl-protein thioesterase family.

It is found in the lysosome. It catalyses the reaction hexadecanoyl-CoA + H2O = hexadecanoate + CoA + H(+). It carries out the reaction S-hexadecanoyl-N-acetylcysteamine + H2O = N-acetylcysteamine + hexadecanoate + H(+). Catalyzes the cleavage of thioester bonds from S-palmitoyl-CoA or S-palmitoyl-N-acetylcysteamine (unbranched structures) but does not have activity against palmitoylcysteine or palmitoylated proteins, branched structures or bulky head groups. Conversely, hydrolyzes both long and short chain fatty acyl-CoA substrate. This is Lysosomal thioesterase PPT2 (Ppt2) from Rattus norvegicus (Rat).